The following is a 247-amino-acid chain: 4-hydroxy-tetrahydrodipicolinate reductase (247 aa).

Residues 12-17, 78-80, and 102-105 each bind NAD(+); these read GITGRM, GTT, and AANF. The active-site Proton donor/acceptor is the H136. H137 is a (S)-2,3,4,5-tetrahydrodipicolinate binding site. Catalysis depends on K140, which acts as the Proton donor. Residue 146–147 participates in (S)-2,3,4,5-tetrahydrodipicolinate binding; the sequence is GT.

Belongs to the DapB family.

Its subcellular location is the cytoplasm. It catalyses the reaction (S)-2,3,4,5-tetrahydrodipicolinate + NAD(+) + H2O = (2S,4S)-4-hydroxy-2,3,4,5-tetrahydrodipicolinate + NADH + H(+). The catalysed reaction is (S)-2,3,4,5-tetrahydrodipicolinate + NADP(+) + H2O = (2S,4S)-4-hydroxy-2,3,4,5-tetrahydrodipicolinate + NADPH + H(+). Its pathway is amino-acid biosynthesis; L-lysine biosynthesis via DAP pathway; (S)-tetrahydrodipicolinate from L-aspartate: step 4/4. Its function is as follows. Catalyzes the conversion of 4-hydroxy-tetrahydrodipicolinate (HTPA) to tetrahydrodipicolinate. The protein is 4-hydroxy-tetrahydrodipicolinate reductase of Acidiphilium cryptum (strain JF-5).